The sequence spans 120 residues: C-C motif chemokine 2 (120 aa).

An N-terminal signal peptide occupies residues 1-23; the sequence is MQRSSVLLCLLVIEATFCSLLMA. Gln-24 is subject to Pyrrolidone carboxylic acid. Intrachain disulfides connect Cys-33/Cys-57 and Cys-34/Cys-73. The tract at residues 91–120 is disordered; that stretch reads RTQQKQNSTAPQTSKPLNIRFTTQDPKNRS. Over residues 93 to 120 the composition is skewed to polar residues; it reads QQKQNSTAPQTSKPLNIRFTTQDPKNRS. The N-linked (GlcNAc...) asparagine glycan is linked to Asn-97.

Belongs to the intercrine beta (chemokine CC) family. In terms of assembly, monomer or homodimer; in equilibrium. Is tethered on endothelial cells by glycosaminoglycan (GAG) side chains of proteoglycans. Interacts with TNFAIP6 (via Link domain). In terms of processing, processing at the N-terminus can regulate receptor and target cell selectivity. Deletion of the N-terminal residue converts it from an activator of basophil to an eosinophil chemoattractant. N-Glycosylated.

It localises to the secreted. Functionally, acts as a ligand for C-C chemokine receptor CCR2. Signals through binding and activation of CCR2 and induces a strong chemotactic response and mobilization of intracellular calcium ions. Exhibits a chemotactic activity for monocytes and basophils but not neutrophils or eosinophils. Plays an important role in mediating peripheral nerve injury-induced neuropathic pain. Increases NMDA-mediated synaptic transmission in both dopamine D1 and D2 receptor-containing neurons, which may be caused by MAPK/ERK-dependent phosphorylation of GRIN2B/NMDAR2B. The sequence is that of C-C motif chemokine 2 (CCL2) from Cavia porcellus (Guinea pig).